Here is a 184-residue protein sequence, read N- to C-terminus: ATP synthase subunit b, chloroplastic (184 aa).

The chain crosses the membrane as a helical span at residues 27–49 (LATNPINLSVVLGVLIFFGKGVL).

This sequence belongs to the ATPase B chain family. F-type ATPases have 2 components, F(1) - the catalytic core - and F(0) - the membrane proton channel. F(1) has five subunits: alpha(3), beta(3), gamma(1), delta(1), epsilon(1). F(0) has four main subunits: a(1), b(1), b'(1) and c(10-14). The alpha and beta chains form an alternating ring which encloses part of the gamma chain. F(1) is attached to F(0) by a central stalk formed by the gamma and epsilon chains, while a peripheral stalk is formed by the delta, b and b' chains.

It localises to the plastid. Its subcellular location is the chloroplast thylakoid membrane. Functionally, f(1)F(0) ATP synthase produces ATP from ADP in the presence of a proton or sodium gradient. F-type ATPases consist of two structural domains, F(1) containing the extramembraneous catalytic core and F(0) containing the membrane proton channel, linked together by a central stalk and a peripheral stalk. During catalysis, ATP synthesis in the catalytic domain of F(1) is coupled via a rotary mechanism of the central stalk subunits to proton translocation. Component of the F(0) channel, it forms part of the peripheral stalk, linking F(1) to F(0). This is ATP synthase subunit b, chloroplastic from Atropa belladonna (Belladonna).